Here is a 494-residue protein sequence, read N- to C-terminus: Splicing regulatory glutamine/lysine-rich protein 1 (494 aa).

The 77-residue stretch at 69–145 (RTVYVGNLNS…RPLKINHSNN (77 aa)) folds into the RRM domain. 2 positions are modified to phosphoserine: serine 174 and serine 187. The tract at residues 176–494 (ISAAIEPESG…ESPCSKADAV (319 aa)) is disordered. Basic and acidic residues predominate over residues 183 to 192 (ESGKSNERKG). Residues 193–262 (GRSRSHTRSK…KSRSRSRSRD (70 aa)) are compositionally biased toward basic residues. The segment covering 263–340 (KRKDTREKVK…DRSKETDEKR (78 aa)) has biased composition (basic and acidic residues). Threonine 348 is subject to Phosphothreonine. Over residues 357–373 (RRSRSTSRERRRRRSRS) the composition is skewed to basic residues. Residues 404–474 (REKERDHISD…SPRTEDEGKV (71 aa)) are compositionally biased toward basic and acidic residues. Residues 476-486 (HNGNCQPNEES) show a composition bias toward polar residues. Lysine 490 participates in a covalent cross-link: Glycyl lysine isopeptide (Lys-Gly) (interchain with G-Cter in SUMO2).

Belongs to the splicing factor SR family. As to quaternary structure, homodimer. Binds SFRS1, SFRS2, SFRS3 and SFRS6. Interacts with the spliceosome. Interacts with SREK1IP1.

The protein resides in the nucleus. Participates in the regulation of alternative splicing by modulating the activity of other splice facors. Inhibits the splicing activity of SFRS1, SFRS2 and SFRS6. Augments the splicing activity of SFRS3. This Mus musculus (Mouse) protein is Splicing regulatory glutamine/lysine-rich protein 1 (Srek1).